The sequence spans 287 residues: X-box-binding protein 1 (287 aa).

The 57-residue stretch at Glu61 to Leu117 folds into the bZIP domain. The interval Lys63 to Ala87 is disordered. The tract at residues Lys63–Lys88 is basic motif. The span at Ala78–Ala87 shows a compositional bias: basic and acidic residues. The interval Ile89–Leu117 is leucine-zipper.

In terms of assembly, interacts with SUMO-conjugating enzyme ubc-9; the interaction is direct. Post-translationally, sumoylated. Sumoylation may negatively modulate the transcription of genes involved in the ER-stress-response.

The protein localises to the nucleus. In terms of biological role, required for transcriptional regulation of the unfolded protein response (UPR) in the endoplasmic reticulum (ER) under stressed conditions, acting downstream of ire-1, and also maintaining ER homeostasis via a negative feedback loop, in parallel with ER kinase pek-1. May also regulate Golgi protein trafficking distal to the ER. Protects the host organism from the detrimental effects of mounting an innate immune response to microbes, such as the Gram-negative bacterium P.aeruginosa, probably by modulating the UPR. Functionally, plays a role in the unconventional cytoplasmic splicing processing of its own mRNA triggered by the endoplasmic reticulum (ER) transmembrane endoribonuclease ire-1: upon ER stress, the emerging xbp-1 polypeptide chain, as part of a mRNA-ribosome-nascent chain (R-RNC) complex, cotranslationally recruits its own unprocessed mRNA through transient docking to the ER membrane and translational pausing, therefore facilitating efficient ire-1-mediated xbp-1 mRNA isoform 2 production. Functions as a stress-inducible potent transcriptional activator during endoplasmic reticulum (ER) stress by inducing unfolded protein response (UPR) target genes via binding to the UPR element (UPRE). Plays a role in modulation of the UPR, lipid metabolism, proteostasis, and lifespan. In neurons, rescues stress resistance, increases longevity, and, drives expression of lysosomal genes in the intestine and activates the UPR in distal, non-neuronal cell types through a cell-nonautonomous mechanism. In neurons or intestine, plays a role in protection against proteotoxicity, acting via positive modulation of genes involved in lysosomal function, including lipases and the fatty-acid desaturase fat-6. Protection against proteotoxicity in neurons is dependent upon the transcription factor atf-6. This is X-box-binding protein 1 from Caenorhabditis elegans.